We begin with the raw amino-acid sequence, 815 residues long: MKPEPKVATVEFTGGKSLSFETGKLAKQAHGSAIVRSGQSVVLATACANADPREGIDFFPLTVDYREYTYAGGRFPGGFIKREGRPSEKEILTSRQIDRPIRPLFPEGFRCETQVIAMVLSADSENDPDVCGINGASAALAVSDIPFNGPIGAVRVGLIEGQNIVNPTYDEMRASKLNIMVVGTAEGIVMIESGAHEATEEEVVSAIEFGHGEIKKICAVISKLAKEVGKTKRTVAPVELDQPYLDGLRKKIGADLADALNTEKYPKSESYAKVKEIKSKLKEEIPADDDAALKKLGKYYELLREDIFRQQVTKEKRRPDGRAFDQIRQIWIEVDVLPRTHGSAVFTRGETQALVTTTLGTGDDMQRMEGFEGEAKKRFMLHYNFPPFSVGEVAFLRGAGRREIGHGALAERALSAVLPSEDKWPYAMRVVSDILESNGSSSMASICGGSLSLMDAGVPLKAPVAGIAMGLVKEGDDYAILTDIAGAEDHYGDMDFKVAGTTQGITALQMDIKIGGITAQIMREALEQARRGRLFILDKMNEVIQSPRTELSEFAPRFYTLQIPTDKIRDLIGPGGKVIRGIVEATGVKIDVEDSGKVNVASSDQEAAKKALKMIGDITATAEVGKTYLGTVTRLADFGAFVEILPGTDGLLHISEVAEHRIKDVKDELHEGDQVLVKVLAVDGNRIKLSRKAVLKEQRAKMATEGGGDGGPAPEVEHSEHGAPGGVTFEGGYEGGDEPEVEEGEPNFNRDDAPGSHGATQPHSGGDRPDRGPRPHGGGGGAGRGGRGRRPGGGGGGGRGGHGGRGGGGGGRGRG.

Mg(2+) contacts are provided by aspartate 489 and aspartate 495. A KH domain is found at 556–615 (PRFYTLQIPTDKIRDLIGPGGKVIRGIVEATGVKIDVEDSGKVNVASSDQEAAKKALKMI). Residues 625–692 (GKTYLGTVTR…DGNRIKLSRK (68 aa)) enclose the S1 motif domain. Positions 700–815 (AKMATEGGGD…GGGGGGRGRG (116 aa)) are disordered. The span at 723–734 (APGGVTFEGGYE) shows a compositional bias: gly residues. Over residues 735 to 745 (GGDEPEVEEGE) the composition is skewed to acidic residues. A compositionally biased stretch (gly residues) spans 775–815 (PHGGGGGAGRGGRGRRPGGGGGGGRGGHGGRGGGGGGRGRG).

The protein belongs to the polyribonucleotide nucleotidyltransferase family. Mg(2+) serves as cofactor.

It is found in the cytoplasm. The enzyme catalyses RNA(n+1) + phosphate = RNA(n) + a ribonucleoside 5'-diphosphate. Involved in mRNA degradation. Catalyzes the phosphorolysis of single-stranded polyribonucleotides processively in the 3'- to 5'-direction. This is Polyribonucleotide nucleotidyltransferase from Koribacter versatilis (strain Ellin345).